The following is a 443-amino-acid chain: MQNELAQTIPELINWTKEREFSLSLSSDRLAFLLAISIYNNEQTDGELLESDLIDLFRYVSEVFDQSEATLTQRANNAINDLVKQRFLNRFSSEFTEGLAIYRITPLGVGVADYYVRQREFSTLRLSIQLSIVADEIQRASSAAEEGGDERFWRNNVFAPLKYSVAEIFDSIDLSQRMMDENQHQIRERIAELLSQNWHEAILSCEQLLDETSGNLRELQDTLNAAGDKLQAQLLRIQSCLIGRDDLDFVDQLIVNLQNKLDRIISWGQQAIDLWIGYDRHVHKFIRTAIDMDKNRVFGQHLRQSIQDYFNAPWLLYTAKAESLLDLRDDETMLNEAEAVGELPSELEYESLSDVQEQIISVMQAHLAPFRAEGKPIDLGAVLREQLALYPQSRHFDVARIIVDQAVKLGMASLDSQAVYPEWQAINDNGAEVQANVIDQYNK.

A leucine-zipper region spans residues 209 to 237 (LDETSGNLRELQDTLNAAGDKLQAQLLRI).

It belongs to the MukF family. In terms of assembly, interacts, and probably forms a ternary complex, with MukE and MukB via its C-terminal region. The complex formation is stimulated by calcium or magnesium. It is required for an interaction between MukE and MukB.

It is found in the cytoplasm. The protein resides in the nucleoid. Involved in chromosome condensation, segregation and cell cycle progression. May participate in facilitating chromosome segregation by condensation DNA from both sides of a centrally located replisome during cell division. Not required for mini-F plasmid partitioning. Probably acts via its interaction with MukB and MukE. Overexpression results in anucleate cells. It has a calcium binding activity. This Actinobacillus pleuropneumoniae serotype 3 (strain JL03) protein is Chromosome partition protein MukF.